The chain runs to 386 residues: Glucose-1-phosphate adenylyltransferase (386 aa).

Alpha-D-glucose 1-phosphate is bound by residues Tyr100, Gly165, Glu180–Lys181, and Ser191.

Belongs to the bacterial/plant glucose-1-phosphate adenylyltransferase family. In terms of assembly, homotetramer.

It carries out the reaction alpha-D-glucose 1-phosphate + ATP + H(+) = ADP-alpha-D-glucose + diphosphate. It functions in the pathway glycan biosynthesis; glycogen biosynthesis. Its function is as follows. Involved in the biosynthesis of ADP-glucose, a building block required for the elongation reactions to produce glycogen. Catalyzes the reaction between ATP and alpha-D-glucose 1-phosphate (G1P) to produce pyrophosphate and ADP-Glc. This chain is Glucose-1-phosphate adenylyltransferase, found in Clostridium beijerinckii (strain ATCC 51743 / NCIMB 8052) (Clostridium acetobutylicum).